We begin with the raw amino-acid sequence, 699 residues long: Envelope glycoprotein G (699 aa).

An N-terminal signal peptide occupies residues 1–22 (MHAIAPRLLLLFVLSGLPGTRG). Residues 23 to 650 (GSGVPGPINP…WFLTASPALD (628 aa)) are Virion surface-facing. 2 N-linked (GlcNAc...) asparagine; by host glycosylation sites follow: N104 and N163. Disordered stretches follow at residues 302–390 (PGAL…TTPP) and 403–632 (TPEE…PSGP). The span at 323 to 336 (LRTDPEGVDPDVRA) shows a compositional bias: basic and acidic residues. Over residues 348–359 (EDTSSDSPTSAP) the composition is skewed to polar residues. Composition is skewed to low complexity over residues 376-390 (DPSA…TTPP) and 403-447 (TPEE…AKTP). A glycan (N-linked (GlcNAc...) asparagine; by host) is linked at N437. 2 stretches are compositionally biased toward pro residues: residues 448 to 459 (PTTPAPTTPPPT) and 467 to 482 (PTTP…PATP). Positions 483–531 (GPVGASAAPTADSPLTASPPATAPGPSAANVSVAATTATPGTRGTARTP) are enriched in low complexity. N-linked (GlcNAc...) asparagine; by host glycosylation is present at N512. Residues 544-554 (DAPPGSPAPPP) show a composition bias toward pro residues. Acidic residues predominate over residues 562 to 578 (EEFEGAGDGEPPEDDDS). Pro residues predominate over residues 589–605 (PNKPPPARPGPIRPTLP). The helical transmembrane segment at 651 to 671 (ILFIISTTIHTAAFVCLVALA) threads the bilayer. Over 672 to 699 (AQLWRGRAGRRRYAHPSVRYVCLPPERD) the chain is Intravirion.

The protein belongs to the alphaherpesvirinae glycoprotein G family.

It localises to the virion membrane. Functionally, chemokine-binding protein that inhibits neutrophils' chemotaxis. The protein is Envelope glycoprotein G (gG) of Human herpesvirus 2 (strain HG52) (HHV-2).